The primary structure comprises 603 residues: Thread biopolymer filament subunit gamma (603 aa).

The tract at residues Met1–Lys191 is head. Positions Val158–Val476 constitute an IF rod domain. The tract at residues Leu193–Glu227 is coil 1A. The segment at Arg228 to Ala240 is linker 1. The tract at residues Thr241–Tyr341 is coil 1B. The linker 12 stretch occupies residues Gln342–Gln362. A coil 2A region spans residues Ile363–Ile381. Positions Asn382–Gln389 are linker 2. The coil 2B stretch occupies residues Pro390 to Thr510. The tract at residues Thr511–Gln603 is tail. Residues Ser562 to Ala587 are compositionally biased toward low complexity. The segment at Ser562–Gln603 is disordered.

The protein belongs to the intermediate filament family. Coiled-coil heterodimer of an alpha and a gamma subunit. Assemble into 10 nm filaments. Forms a massive, conical, intermediate filament biopolymer of approximately 60 cm.

It is found in the secreted. It localises to the extracellular space. Functionally, released extracellularly into seawater and provides physical and biological defense against invasive organism by modulation of the viscoelastic properties of mucus. The polypeptide is Thread biopolymer filament subunit gamma (Eptatretus stoutii (Pacific hagfish)).